The chain runs to 791 residues: Putative DNA (cytosine-5)-methyltransferase CMT1 (791 aa).

A disordered region spans residues 37–59 (YQSKKTKLQAPTKKPANKGGKKE). One can recognise a BAH domain in the interval 79–199 (VLINLNDDVY…VPYLNFTSAD (121 aa)). The SAM-dependent MTase C5-type domain maps to 225–768 (KFLLDLYSGC…YAFGMASQGL (544 aa)). Positions 308–333 (VESISELEDEEVEENDDIDEASTGAE) form a coiled coil. The Chromo domain occupies 339-404 (FEVEKFLGIM…DGFKSHLLPL (66 aa)). C417 is a catalytic residue.

It belongs to the class I-like SAM-binding methyltransferase superfamily. C5-methyltransferase family. In terms of tissue distribution, expressed in flowers. Not detected in leaves, roots, seedlings and plants prior formation of flower buds.

The protein localises to the nucleus. It carries out the reaction a 2'-deoxycytidine in DNA + S-adenosyl-L-methionine = a 5-methyl-2'-deoxycytidine in DNA + S-adenosyl-L-homocysteine + H(+). Its function is as follows. May be involved in the CpXpG methylation and in gene silencing. The chain is Putative DNA (cytosine-5)-methyltransferase CMT1 (CMT1) from Arabidopsis thaliana (Mouse-ear cress).